Reading from the N-terminus, the 180-residue chain is Adenine phosphoribosyltransferase (180 aa).

Serine 2 is subject to N-acetylserine. Phosphoserine occurs at positions 15 and 30. Tyrosine 60 bears the Phosphotyrosine mark. Position 66 is a phosphoserine (serine 66). The residue at position 114 (lysine 114) is an N6-acetyllysine. Phosphothreonine is present on threonine 135.

Belongs to the purine/pyrimidine phosphoribosyltransferase family. As to quaternary structure, homodimer.

The protein localises to the cytoplasm. It carries out the reaction AMP + diphosphate = 5-phospho-alpha-D-ribose 1-diphosphate + adenine. The protein operates within purine metabolism; AMP biosynthesis via salvage pathway; AMP from adenine: step 1/1. Catalyzes a salvage reaction resulting in the formation of AMP, that is energically less costly than de novo synthesis. The protein is Adenine phosphoribosyltransferase of Mus musculus (Mouse).